The primary structure comprises 450 residues: tRNA-2-methylthio-N(6)-dimethylallyladenosine synthase (450 aa).

The 117-residue stretch at arginine 8–alanine 124 folds into the MTTase N-terminal domain. Cysteine 17, cysteine 52, cysteine 87, cysteine 162, cysteine 166, and cysteine 169 together coordinate [4Fe-4S] cluster. A Radical SAM core domain is found at alanine 148–alanine 380. The region spanning arginine 383–glutamine 445 is the TRAM domain.

It belongs to the methylthiotransferase family. MiaB subfamily. In terms of assembly, monomer. [4Fe-4S] cluster is required as a cofactor.

The protein localises to the cytoplasm. It carries out the reaction N(6)-dimethylallyladenosine(37) in tRNA + (sulfur carrier)-SH + AH2 + 2 S-adenosyl-L-methionine = 2-methylsulfanyl-N(6)-dimethylallyladenosine(37) in tRNA + (sulfur carrier)-H + 5'-deoxyadenosine + L-methionine + A + S-adenosyl-L-homocysteine + 2 H(+). Functionally, catalyzes the methylthiolation of N6-(dimethylallyl)adenosine (i(6)A), leading to the formation of 2-methylthio-N6-(dimethylallyl)adenosine (ms(2)i(6)A) at position 37 in tRNAs that read codons beginning with uridine. In Acidiphilium cryptum (strain JF-5), this protein is tRNA-2-methylthio-N(6)-dimethylallyladenosine synthase.